The chain runs to 318 residues: Glycine--tRNA ligase alpha subunit (318 aa).

Belongs to the class-II aminoacyl-tRNA synthetase family. As to quaternary structure, tetramer of two alpha and two beta subunits.

It is found in the cytoplasm. The enzyme catalyses tRNA(Gly) + glycine + ATP = glycyl-tRNA(Gly) + AMP + diphosphate. The polypeptide is Glycine--tRNA ligase alpha subunit (Methylibium petroleiphilum (strain ATCC BAA-1232 / LMG 22953 / PM1)).